The primary structure comprises 119 residues: Protein phosphatase EYA3 (119 aa).

It belongs to the HAD-like hydrolase superfamily. EYA family. Requires Mg(2+) as cofactor.

Its subcellular location is the cytoplasm. It is found in the nucleus. It carries out the reaction O-phospho-L-tyrosyl-[protein] + H2O = L-tyrosyl-[protein] + phosphate. In terms of biological role, tyrosine phosphatase that specifically dephosphorylates 'Tyr-142' of histone H2AX (H2AXY142ph). 'Tyr-142' phosphorylation of histone H2AX plays a central role in DNA repair and acts as a mark that distinguishes between apoptotic and repair responses to genotoxic stress. Promotes efficient DNA repair by dephosphorylating H2AX, promoting the recruitment of DNA repair complexes containing MDC1. Its function as histone phosphatase probably explains its role in transcription regulation during organogenesis. May be involved in development of the eye. The sequence is that of Protein phosphatase EYA3 (EYA3) from Gallus gallus (Chicken).